A 249-amino-acid polypeptide reads, in one-letter code: Adenosylcobinamide-GDP ribazoletransferase (249 aa).

A run of 6 helical transmembrane segments spans residues 32–52 (MVAF…TWFG), 53–73 (ATWL…WGAI), 107–127 (IGTM…LFVL), 136–156 (ALIV…FWFP), 190–210 (LLWW…IIIA), and 224–244 (TYGA…AALV).

The protein belongs to the CobS family. Mg(2+) is required as a cofactor.

It localises to the cell membrane. The enzyme catalyses alpha-ribazole + adenosylcob(III)inamide-GDP = adenosylcob(III)alamin + GMP + H(+). It catalyses the reaction alpha-ribazole 5'-phosphate + adenosylcob(III)inamide-GDP = adenosylcob(III)alamin 5'-phosphate + GMP + H(+). It participates in cofactor biosynthesis; adenosylcobalamin biosynthesis; adenosylcobalamin from cob(II)yrinate a,c-diamide: step 7/7. Its function is as follows. Joins adenosylcobinamide-GDP and alpha-ribazole to generate adenosylcobalamin (Ado-cobalamin). Also synthesizes adenosylcobalamin 5'-phosphate from adenosylcobinamide-GDP and alpha-ribazole 5'-phosphate. The polypeptide is Adenosylcobinamide-GDP ribazoletransferase (Herpetosiphon aurantiacus (strain ATCC 23779 / DSM 785 / 114-95)).